The chain runs to 321 residues: MNRPERLQPGVKLRDADKVARIPVKIMPSERETMLRKPDWLRVKLPASNQRITEIKQALRSNGLHSVCEEASCPNLAECFNHGTATFMILGAICTRRCPFCDVAHGRPLKPDADEPVKLAKTIRDMKLKYVVITSVDRDDLRDGGAQHFADCIREIRALNPHIQIETLVPDFRGRIDVALDILSTNPPDVFNHNLETAPAHYRKARPGANYQWSLDLLKRFKERHPNIPTKSGLMMGLGETNEEIIQVLKDLRAHDVNMLTLGQYLQPSKFHLPVERYVSPQEFDELKVIAEDLGFSHAACGPLVRSSYHADLQAQGKEVK.

Residues C68, C73, C79, C94, C98, C101, and S308 each coordinate [4Fe-4S] cluster. Residues 80 to 297 form the Radical SAM core domain; sequence FNHGTATFMI…KVIAEDLGFS (218 aa).

It belongs to the radical SAM superfamily. Lipoyl synthase family. [4Fe-4S] cluster is required as a cofactor.

It is found in the cytoplasm. It carries out the reaction [[Fe-S] cluster scaffold protein carrying a second [4Fe-4S](2+) cluster] + N(6)-octanoyl-L-lysyl-[protein] + 2 oxidized [2Fe-2S]-[ferredoxin] + 2 S-adenosyl-L-methionine + 4 H(+) = [[Fe-S] cluster scaffold protein] + N(6)-[(R)-dihydrolipoyl]-L-lysyl-[protein] + 4 Fe(3+) + 2 hydrogen sulfide + 2 5'-deoxyadenosine + 2 L-methionine + 2 reduced [2Fe-2S]-[ferredoxin]. The protein operates within protein modification; protein lipoylation via endogenous pathway; protein N(6)-(lipoyl)lysine from octanoyl-[acyl-carrier-protein]: step 2/2. In terms of biological role, catalyzes the radical-mediated insertion of two sulfur atoms into the C-6 and C-8 positions of the octanoyl moiety bound to the lipoyl domains of lipoate-dependent enzymes, thereby converting the octanoylated domains into lipoylated derivatives. The protein is Lipoyl synthase of Shewanella amazonensis (strain ATCC BAA-1098 / SB2B).